Consider the following 345-residue polypeptide: UDP-3-O-acylglucosamine N-acyltransferase (345 aa).

H239 (proton acceptor) is an active-site residue.

Belongs to the transferase hexapeptide repeat family. LpxD subfamily. Homotrimer.

It carries out the reaction a UDP-3-O-[(3R)-3-hydroxyacyl]-alpha-D-glucosamine + a (3R)-hydroxyacyl-[ACP] = a UDP-2-N,3-O-bis[(3R)-3-hydroxyacyl]-alpha-D-glucosamine + holo-[ACP] + H(+). It functions in the pathway bacterial outer membrane biogenesis; LPS lipid A biosynthesis. Its function is as follows. Catalyzes the N-acylation of UDP-3-O-acylglucosamine using 3-hydroxyacyl-ACP as the acyl donor. Is involved in the biosynthesis of lipid A, a phosphorylated glycolipid that anchors the lipopolysaccharide to the outer membrane of the cell. This chain is UDP-3-O-acylglucosamine N-acyltransferase, found in Geobacter metallireducens (strain ATCC 53774 / DSM 7210 / GS-15).